Here is a 181-residue protein sequence, read N- to C-terminus: Regulator of G-protein signaling 10 (181 aa).

Residues 1–35 are disordered; that stretch reads MFTRAVSRLSRKRPPSDIHDGDGSSSSGHQSLKST. Phosphoserine is present on residues S24 and S41. One can recognise an RGS domain in the interval 41–156; the sequence is SLENLLEDPE…LKSDLFLKPK (116 aa). Residue C74 is the site of S-palmitoyl cysteine attachment. A disordered region spans residues 155–181; sequence PKRTEEEEEEPPDAQTAAKRASRIYNT. S176 is modified (phosphoserine).

As to quaternary structure, interacts with GNAZ, GNAI1 and GNAI3. Associates specifically with the activated, GTP-bound forms of GNAZ and GNAI3.

It localises to the cytoplasm. Its subcellular location is the cytosol. It is found in the nucleus. Functionally, regulates G protein-coupled receptor signaling cascades, including signaling downstream of the muscarinic acetylcholine receptor CHRM2. Inhibits signal transduction by increasing the GTPase activity of G protein alpha subunits, thereby driving them into their inactive GDP-bound form. Modulates the activity of potassium channels that are activated in response to CHRM2 signaling. Activity on GNAZ is inhibited by palmitoylation of the G-protein. This chain is Regulator of G-protein signaling 10 (Rgs10), found in Mus musculus (Mouse).